Here is a 461-residue protein sequence, read N- to C-terminus: uncharacterized protein (461 aa).

3 LRR repeats span residues 119-140, 141-162, and 163-184; these read NVKK…EKMS, LLEV…QHCK, and NLKE…EYLK. The 41-residue stretch at 197–237 folds into the LRRCT domain; it reads NPCVGEGGQEYRRKVIRVLPNLTKLDDKPVTTTDHQEAIED.

This is an uncharacterized protein from Caenorhabditis elegans.